Reading from the N-terminus, the 1275-residue chain is Surfactin synthase subunit 3 (1275 aa).

One can recognise a Carrier domain in the interval 968–1043; the sequence is GPRNEMEETI…GISAYLKNGG (76 aa). O-(pantetheine 4'-phosphoryl)serine is present on serine 1003. Positions 1059-1271 are thioesterase; the sequence is QIIFAFPPVL…ILLEFLNTQT (213 aa). Catalysis depends on residues serine 1120, aspartate 1147, and histidine 1247.

The protein belongs to the ATP-dependent AMP-binding enzyme family. Pantetheine 4'-phosphate serves as cofactor.

Its pathway is antibiotic biosynthesis; surfactin biosynthesis. Functionally, probably activates a leucine. This is Surfactin synthase subunit 3 (srfAC) from Bacillus subtilis (strain 168).